Reading from the N-terminus, the 239-residue chain is tRNA (guanine-N(7)-)-methyltransferase (239 aa).

S-adenosyl-L-methionine contacts are provided by E68, E93, D120, and D143. Residue D143 is part of the active site. Residues K147, D180, and 217 to 220 (TKFE) contribute to the substrate site.

This sequence belongs to the class I-like SAM-binding methyltransferase superfamily. TrmB family.

The catalysed reaction is guanosine(46) in tRNA + S-adenosyl-L-methionine = N(7)-methylguanosine(46) in tRNA + S-adenosyl-L-homocysteine. It functions in the pathway tRNA modification; N(7)-methylguanine-tRNA biosynthesis. Its function is as follows. Catalyzes the formation of N(7)-methylguanine at position 46 (m7G46) in tRNA. This chain is tRNA (guanine-N(7)-)-methyltransferase, found in Vibrio cholerae serotype O1 (strain ATCC 39315 / El Tor Inaba N16961).